The following is a 126-amino-acid chain: Spermidine export protein MdtJ (126 aa).

The next 4 membrane-spanning stretches (helical) occupy residues 1 to 21 (MIYW…TLSM), 30 to 50 (ITGH…LSLA), 54 to 74 (VALG…ITLF), and 81 to 101 (EPFS…IVML).

This sequence belongs to the drug/metabolite transporter (DMT) superfamily. Small multidrug resistance (SMR) (TC 2.A.7.1) family. MdtJ subfamily. Forms a complex with MdtI.

It localises to the cell inner membrane. Its function is as follows. Catalyzes the excretion of spermidine. The sequence is that of Spermidine export protein MdtJ from Sodalis glossinidius (strain morsitans).